The following is a 70-amino-acid chain: MSDIADRVKKIVVEHLGVEEEKVTETTSFIDDLGADSLDTVELVMAFEEEFGIEIPDDAAETIQTFGDAP.

Residues 2 to 70 enclose the Carrier domain; the sequence is SDIADRVKKI…ETIQTFGDAP (69 aa). Position 37 is an O-(pantetheine 4'-phosphoryl)serine (S37).

This sequence belongs to the acyl carrier protein (ACP) family. In terms of processing, 4'-phosphopantetheine is transferred from CoA to a specific serine of apo-ACP by AcpS. This modification is essential for activity because fatty acids are bound in thioester linkage to the sulfhydryl of the prosthetic group.

Its subcellular location is the cytoplasm. The protein operates within lipid metabolism; fatty acid biosynthesis. Its function is as follows. Carrier of the growing fatty acid chain in fatty acid biosynthesis. The chain is Acyl carrier protein from Cereibacter sphaeroides (Rhodobacter sphaeroides).